The following is a 181-amino-acid chain: Lysozyme B (181 aa).

A signal peptide spans M1–G19. Positions L139 to E181 are excised as a propeptide.

The protein belongs to the dictyostelium lysozyme family. Contains six disulfide bonds.

It localises to the cytoplasmic vesicle lumen. The catalysed reaction is Hydrolysis of (1-&gt;4)-beta-linkages between N-acetylmuramic acid and N-acetyl-D-glucosamine residues in a peptidoglycan and between N-acetyl-D-glucosamine residues in chitodextrins.. Functionally, has antibacterial activity. The polypeptide is Lysozyme B (alyB) (Dictyostelium discoideum (Social amoeba)).